Reading from the N-terminus, the 554-residue chain is (Z)-gamma-bisabolene synthase 2 (554 aa).

Asp306, Asp310, Asp450, and Asp458 together coordinate Mg(2+). The short motif at 306–310 (DDACD) is the DDXXD motif element.

It belongs to the terpene synthase family. Tpsa subfamily. Mg(2+) is required as a cofactor. Requires Mn(2+) as cofactor. Predominantly expressed in roots. Expressed in the cortex and the sub-epidermal layers of roots. Also detected in leaf hydathodes and flower stigmata.

It localises to the cytoplasm. The enzyme catalyses (2E,6E)-farnesyl diphosphate = (Z)-gamma-bisabolene + diphosphate. It participates in secondary metabolite biosynthesis; terpenoid biosynthesis. Involved in sesquiterpene (C15) biosynthesis. The major product is (Z)-gamma-bisabolene with minor amounts of (E)-nerolidol and alpha-bisabolol. In Arabidopsis thaliana (Mouse-ear cress), this protein is (Z)-gamma-bisabolene synthase 2 (TPS13).